Reading from the N-terminus, the 267-residue chain is Mannose-specific lectin 1 (267 aa).

An N-terminal signal peptide occupies residues 1–26 (MAKLLLFLLPAILGLLVPPRSWSAVA). Bulb-type lectin domains lie at 29 to 134 (TNYL…PSVP) and 148 to 255 (NNLL…PQAK). Beta-D-mannose is bound by residues 54-58 (QDDCN), tyrosine 62, tryptophan 66, glutamine 67, 173-177 (QGDCN), tyrosine 181, and 185-188 (YGWQ). Residues 54–62 (QDDCNLVLY) carry the Carbohydrate-binding motif 1 motif. 2 disulfides stabilise this stretch: cysteine 57-cysteine 77 and cysteine 176-cysteine 198. The Carbohydrate-binding motif 2 motif lies at 173 to 181 (QGDCNLVLY).

In terms of assembly, forms heterotetramer of 2 chains 1 and 2 chains 2 arranged as a dimer of chain 1 and chain 2 heterodimers.

The protein localises to the secreted. In terms of biological role, mannose-specific lectin. Shows agglutinating activity towards erythrocytes from rabbit. The chain is Mannose-specific lectin 1 from Colocasia esculenta (Wild taro).